We begin with the raw amino-acid sequence, 283 residues long: Thymidylate synthase (283 aa).

A dUMP-binding site is contributed by arginine 22. Catalysis depends on cysteine 160, which acts as the Nucleophile. Residues arginine 180–aspartate 183, asparagine 191, and histidine 221–tyrosine 223 each bind dUMP. Aspartate 183 lines the (6R)-5,10-methylene-5,6,7,8-tetrahydrofolate pocket. Residue serine 282 coordinates (6R)-5,10-methylene-5,6,7,8-tetrahydrofolate.

Belongs to the thymidylate synthase family. Bacterial-type ThyA subfamily. As to quaternary structure, homodimer.

The protein resides in the cytoplasm. It catalyses the reaction dUMP + (6R)-5,10-methylene-5,6,7,8-tetrahydrofolate = 7,8-dihydrofolate + dTMP. It functions in the pathway pyrimidine metabolism; dTTP biosynthesis. Catalyzes the reductive methylation of 2'-deoxyuridine-5'-monophosphate (dUMP) to 2'-deoxythymidine-5'-monophosphate (dTMP) while utilizing 5,10-methylenetetrahydrofolate (mTHF) as the methyl donor and reductant in the reaction, yielding dihydrofolate (DHF) as a by-product. This enzymatic reaction provides an intracellular de novo source of dTMP, an essential precursor for DNA biosynthesis. The polypeptide is Thymidylate synthase (Shewanella halifaxensis (strain HAW-EB4)).